Consider the following 343-residue polypeptide: Aspartate-semialdehyde dehydrogenase (343 aa).

Residues 20 to 23 and 48 to 49 each bind NADP(+); these read SGAV and RS. Arg108 lines the phosphate pocket. The active-site Acyl-thioester intermediate is the Cys137. Gln164 serves as a coordination point for substrate. 167 to 168 is an NADP(+) binding site; that stretch reads SG. Lys221 contacts phosphate. Residue Arg243 coordinates substrate. His250 acts as the Proton acceptor in catalysis. NADP(+) is bound at residue Gln323.

This sequence belongs to the aspartate-semialdehyde dehydrogenase family. Homodimer.

The catalysed reaction is L-aspartate 4-semialdehyde + phosphate + NADP(+) = 4-phospho-L-aspartate + NADPH + H(+). It participates in amino-acid biosynthesis; L-lysine biosynthesis via DAP pathway; (S)-tetrahydrodipicolinate from L-aspartate: step 2/4. It functions in the pathway amino-acid biosynthesis; L-methionine biosynthesis via de novo pathway; L-homoserine from L-aspartate: step 2/3. The protein operates within amino-acid biosynthesis; L-threonine biosynthesis; L-threonine from L-aspartate: step 2/5. Its function is as follows. Catalyzes the NADPH-dependent formation of L-aspartate-semialdehyde (L-ASA) by the reductive dephosphorylation of L-aspartyl-4-phosphate. The polypeptide is Aspartate-semialdehyde dehydrogenase (Prochlorococcus marinus (strain SARG / CCMP1375 / SS120)).